We begin with the raw amino-acid sequence, 415 residues long: WD repeat-containing protein JIP5 (415 aa).

5 WD repeats span residues 5 to 44 (DVGS…KEQA), 104 to 142 (AHDS…CVRE), 145 to 184 (QHFD…PEPF), 189 to 228 (DQDD…GDCV), and 233 to 282 (GHPL…VVAD). The disordered stretch occupies residues 328 to 415 (GALGVTNENE…DVENAFFDEL (88 aa)). Positions 337 to 346 (EQSDEDEEMD) are enriched in acidic residues. Positions 358–367 (DGSGSSSSGE) are enriched in low complexity. The span at 390–405 (EQKPLDVDKPKGRNEI) shows a compositional bias: basic and acidic residues.

This sequence belongs to the WD repeat WDR55 family.

It is found in the nucleus. The protein resides in the nucleolus. The sequence is that of WD repeat-containing protein JIP5 (JIP5) from Laccaria bicolor (strain S238N-H82 / ATCC MYA-4686) (Bicoloured deceiver).